We begin with the raw amino-acid sequence, 360 residues long: MLVYLAEYLTQFYTGFNVFSYVTFRAILGLMTALMFSLWWGPKMIERLQMLQIGQIVRNDGPESHFSKRGTPTMGGILILAGVFISVLLWGDLGSRYVWVVLFVLASFGLIGFIDDYRKVVRKDTKGLIAKWKYILQSLAALVIAFYLYASADMTGETQLVVPFFKDIMPQLGGFFIVLAYFTIVGSSNAVNLTDGLDGLAIMPTVMVAAAFALIAYLSGHVQFANYLHLPYLPGAGELVIVCTAIVGAGLGFLWFNTYPAQVFMGDVGSLSLGAALGAIAVLVRQEILLVIMGGVFVMETVSVILQVGSYKLRGQRIFRMAPIHHHYELKGWPEPRVIVRFWIISLFLVLLGLATLKLR.

Helical transmembrane passes span 21 to 41, 74 to 94, 97 to 117, 134 to 154, 168 to 188, 199 to 219, 236 to 256, 263 to 283, 288 to 308, and 338 to 358; these read YVTF…LWWG, MGGI…GDLG, YVWV…IDDY, YILQ…SADM, IMPQ…VGSS, GLAI…AYLS, AGEL…FLWF, VFMG…IAVL, ILLV…ILQV, and VIVR…ATLK.

It belongs to the glycosyltransferase 4 family. MraY subfamily. Mg(2+) serves as cofactor.

Its subcellular location is the cell inner membrane. It carries out the reaction UDP-N-acetyl-alpha-D-muramoyl-L-alanyl-gamma-D-glutamyl-meso-2,6-diaminopimeloyl-D-alanyl-D-alanine + di-trans,octa-cis-undecaprenyl phosphate = di-trans,octa-cis-undecaprenyl diphospho-N-acetyl-alpha-D-muramoyl-L-alanyl-D-glutamyl-meso-2,6-diaminopimeloyl-D-alanyl-D-alanine + UMP. It participates in cell wall biogenesis; peptidoglycan biosynthesis. Its function is as follows. Catalyzes the initial step of the lipid cycle reactions in the biosynthesis of the cell wall peptidoglycan: transfers peptidoglycan precursor phospho-MurNAc-pentapeptide from UDP-MurNAc-pentapeptide onto the lipid carrier undecaprenyl phosphate, yielding undecaprenyl-pyrophosphoryl-MurNAc-pentapeptide, known as lipid I. The sequence is that of Phospho-N-acetylmuramoyl-pentapeptide-transferase from Shewanella woodyi (strain ATCC 51908 / MS32).